The primary structure comprises 773 residues: 4'-phosphopantetheine phosphatase (773 aa).

Alanine 2 is modified (N-acetylalanine). The segment at 2 to 402 is pantothenate kinase; sequence AECGASGSGS…SPELGPAQRA (401 aa). Residues serine 196 and serine 199 each contribute to the acetyl-CoA site. Tyrosine 320 carries the post-translational modification 3'-nitrotyrosine. Phosphoserine is present on residues serine 393 and serine 404. The 4'-phosphopantetheine phosphatase stretch occupies residues 403 to 773; sequence RSGTFDLLEM…VIFKYEVPAE (371 aa). Position 406 is a phosphothreonine (threonine 406). Mn(2+) contacts are provided by aspartate 623, asparagine 624, and aspartate 659. The Subfamily II EGMGR motif motif lies at 724 to 728; the sequence is EGMGR.

It in the N-terminal section; belongs to the type II pantothenate kinase family. This sequence in the C-terminal section; belongs to the damage-control phosphatase family. Phosphopantetheine phosphatase II subfamily. Homodimer. Interacts with PKM. It depends on Mn(2+) as a cofactor. Requires Ni(2+) as cofactor. As to expression, widely expressed with high expression in the muscle. Expressed in the retina and lens epithelium, mainly in ganglion cell layer, outer plexiform layer and retinal pigment layer (at protein level).

It is found in the cytoplasm. The enzyme catalyses (R)-4'-phosphopantetheine + H2O = (R)-pantetheine + phosphate. It catalyses the reaction (R)-4'-phosphopantetheine sulfonate + H2O = (R)-pantetheine sulfonate + phosphate. The catalysed reaction is (R)-4'-phospho-S-sulfopantetheine + H2O = (R)-S-sulfopantetheine + phosphate. Its activity is regulated as follows. Activity is strongly promoted by Co(2+), Ni(2+), Mg(2+) and Mn(2+). Activity is inhibited by EDTA. Functionally, phosphatase which shows a preference for 4'-phosphopantetheine and its oxidatively damaged forms (sulfonate or S-sulfonate), providing strong indirect evidence that the phosphatase activity pre-empts damage in the coenzyme A (CoA) pathway. Hydrolyzing excess 4'-phosphopantetheine could constitute a directed overflow mechanism to prevent its oxidation to the S-sulfonate, sulfonate, or other forms. Hydrolyzing 4'-phosphopantetheine sulfonate or S-sulfonate would forestall their conversion to inactive forms of CoA and acyl carrier protein. May play a role in the physiological regulation of CoA intracellular levels. This chain is 4'-phosphopantetheine phosphatase, found in Homo sapiens (Human).